A 179-amino-acid polypeptide reads, in one-letter code: Inner membrane-spanning protein YciB (179 aa).

Transmembrane regions (helical) follow at residues 24 to 44 (TATG…YAME), 49 to 69 (AMQK…LVLH), 76 to 96 (WKPT…LWAL), 121 to 141 (VAWI…AAYF), and 151 to 171 (LWGY…ISPH).

Belongs to the YciB family.

It localises to the cell inner membrane. Functionally, plays a role in cell envelope biogenesis, maintenance of cell envelope integrity and membrane homeostasis. The protein is Inner membrane-spanning protein YciB of Variovorax paradoxus (strain S110).